A 712-amino-acid polypeptide reads, in one-letter code: tRNA 5-methylaminomethyl-2-thiouridine biosynthesis bifunctional protein MnmC (712 aa).

The tRNA (mnm(5)s(2)U34)-methyltransferase stretch occupies residues 1 to 268; that stretch reads MPNMRHRVNS…RRALRHAQSD (268 aa). Positions 292–712 are FAD-dependent cmnm(5)s(2)U34 oxidoreductase; that stretch reads IGGGVASTHL…MRKLIKGKAL (421 aa).

This sequence in the N-terminal section; belongs to the methyltransferase superfamily. tRNA (mnm(5)s(2)U34)-methyltransferase family. The protein in the C-terminal section; belongs to the DAO family. FAD serves as cofactor.

The protein localises to the cytoplasm. It carries out the reaction 5-aminomethyl-2-thiouridine(34) in tRNA + S-adenosyl-L-methionine = 5-methylaminomethyl-2-thiouridine(34) in tRNA + S-adenosyl-L-homocysteine + H(+). Catalyzes the last two steps in the biosynthesis of 5-methylaminomethyl-2-thiouridine (mnm(5)s(2)U) at the wobble position (U34) in tRNA. Catalyzes the FAD-dependent demodification of cmnm(5)s(2)U34 to nm(5)s(2)U34, followed by the transfer of a methyl group from S-adenosyl-L-methionine to nm(5)s(2)U34, to form mnm(5)s(2)U34. This Shewanella sediminis (strain HAW-EB3) protein is tRNA 5-methylaminomethyl-2-thiouridine biosynthesis bifunctional protein MnmC.